The chain runs to 120 residues: Small ribosomal subunit protein uS13 (120 aa).

The segment at Pro-97–Lys-120 is disordered.

It belongs to the universal ribosomal protein uS13 family. Part of the 30S ribosomal subunit. Forms a loose heterodimer with protein S19. Forms two bridges to the 50S subunit in the 70S ribosome.

Located at the top of the head of the 30S subunit, it contacts several helices of the 16S rRNA. In the 70S ribosome it contacts the 23S rRNA (bridge B1a) and protein L5 of the 50S subunit (bridge B1b), connecting the 2 subunits; these bridges are implicated in subunit movement. Contacts the tRNAs in the A and P-sites. This Nitratiruptor sp. (strain SB155-2) protein is Small ribosomal subunit protein uS13.